Reading from the N-terminus, the 447-residue chain is Cobyrinate a,c-diamide synthase (447 aa).

The GATase cobBQ-type domain maps to 252-439 (KIAVAFDESF…AHQHCIGNPY (188 aa)). Cysteine 331 functions as the Nucleophile in the catalytic mechanism.

It belongs to the CobB/CbiA family. Requires Mg(2+) as cofactor.

The enzyme catalyses cob(II)yrinate + 2 L-glutamine + 2 ATP + 2 H2O = cob(II)yrinate a,c diamide + 2 L-glutamate + 2 ADP + 2 phosphate + 2 H(+). The catalysed reaction is Ni-sirohydrochlorin + 2 L-glutamine + 2 ATP + 2 H2O = Ni-sirohydrochlorin a,c-diamide + 2 L-glutamate + 2 ADP + 2 phosphate + 2 H(+). It functions in the pathway cofactor biosynthesis; adenosylcobalamin biosynthesis; cob(II)yrinate a,c-diamide from sirohydrochlorin (anaerobic route): step 10/10. Functionally, catalyzes the ATP-dependent amidation of the two carboxylate groups at positions a and c of cobyrinate, using either L-glutamine or ammonia as the nitrogen source. Involved in the biosynthesis of the unique nickel-containing tetrapyrrole coenzyme F430, the prosthetic group of methyl-coenzyme M reductase (MCR), which plays a key role in methanogenesis and anaerobic methane oxidation. Catalyzes the ATP-dependent amidation of the two carboxylate groups at positions a and c of Ni-sirohydrochlorin, using L-glutamine or ammonia as the nitrogen source. This Methanococcus maripaludis (strain C7 / ATCC BAA-1331) protein is Cobyrinate a,c-diamide synthase.